We begin with the raw amino-acid sequence, 315 residues long: Secreted frizzled-related protein 5 (315 aa).

The first 27 residues, 1–27, serve as a signal peptide directing secretion; it reads MRAAAGGARAAVLALLLGALHGAPARG. In terms of domain architecture, FZ spans 46–163; sequence SKPPQCLDIP…PLDNDLCIAV (118 aa). 8 disulfide bridges follow: C51/C114, C61/C107, C98/C133, C122/C160, C126/C150, C179/C251, C182/C253, and C196/C301. An NTR domain is found at 179–301; it reads CAQCEMEHSA…AVKFMFSYPC (123 aa).

This sequence belongs to the secreted frizzled-related protein (sFRP) family. Strongly expressed in the retinal pigment epithelium (RPE). Weak expression in retina, brain, heart, liver, kidney, testis and muscle.

It localises to the secreted. Soluble frizzled-related proteins (sFRPS) function as modulators of Wnt signaling through direct interaction with Wnts. They have a role in regulating cell growth and differentiation in specific cell types. SFRP5 may be involved in determining the polarity of photoreceptor, and perhaps other, cells in the retina. Inhibits Wnt8 signaling, in vitro. This is Secreted frizzled-related protein 5 (SFRP5) from Bos taurus (Bovine).